The primary structure comprises 120 residues: Large ribosomal subunit protein bL12 (120 aa).

The protein belongs to the bacterial ribosomal protein bL12 family. In terms of assembly, homodimer. Part of the ribosomal stalk of the 50S ribosomal subunit. Forms a multimeric L10(L12)X complex, where L10 forms an elongated spine to which 2 to 4 L12 dimers bind in a sequential fashion. Binds GTP-bound translation factors.

Functionally, forms part of the ribosomal stalk which helps the ribosome interact with GTP-bound translation factors. Is thus essential for accurate translation. In Haemophilus ducreyi (strain 35000HP / ATCC 700724), this protein is Large ribosomal subunit protein bL12.